We begin with the raw amino-acid sequence, 305 residues long: Target of rapamycin complex subunit LST8-1 (305 aa).

WD repeat units lie at residues 1–30 (MSQPSVILATASYDHTIRFWEAETGRCYRT), 33–71 (YPDSHVNRLEITPDKHYLAAACNPHIRLFDVNSNSPQPV), 76–115 (SHTNNVMAVGFQCDAKWMYSGSEDGTVKIWDLRAPGCQKE), 117–156 (ESVAAVNTVVLHPNQTELISGDQNGNIRVWDLRANSCSCE), 160–199 (EVDTAVRSLTVMWDGTMVVAANNRGTCYVWRLLRGKQTMT), 209–248 (AHNGHILKCLLSPANKYLATASSDKTVKIWNVDGFKLEKV), and 251–292 (GHQR…KVYQ).

It belongs to the WD repeat LST8 family. In terms of assembly, the target of rapamycin complex 1 (TORC1) is composed of at least RAPTOR, LST8 and TOR. Interacts with TOR. Expressed in the root central cylinder, root tips, emerging lateral roots, vasculature of cotyledons, leaf stomata, leaf stipules, anthers, pollen, filaments, and vasculature of petals and sepals.

The protein resides in the endosome. In terms of biological role, component of TORC1 complex, which is an essential cell growth regulator that controls plant development. Acts by activating transcription, protein synthesis and ribosome biogenesis, and inhibiting mRNA degradation and autophagy. Involved in regulating amino acid accumulation and the synthesis of myo-inositol and raffinose during plant adaptation to long days. Involved in the regulation of plant growth and abscisic acid (ABA) accumulation. Acts as a positive regulation of the ABA biosynthetic genes ZEP, NCED3 and AAO3, and negative regulator of the ABA catabolic genes CYP707A2 and CYP707A3. The sequence is that of Target of rapamycin complex subunit LST8-1 from Arabidopsis thaliana (Mouse-ear cress).